Reading from the N-terminus, the 302-residue chain is 4-hydroxy-tetrahydrodipicolinate synthase (302 aa).

Thr55 lines the pyruvate pocket. Residue Tyr143 is the Proton donor/acceptor of the active site. Lys171 acts as the Schiff-base intermediate with substrate in catalysis. Position 213 (Ile213) interacts with pyruvate.

It belongs to the DapA family. Homotetramer; dimer of dimers.

It localises to the cytoplasm. It carries out the reaction L-aspartate 4-semialdehyde + pyruvate = (2S,4S)-4-hydroxy-2,3,4,5-tetrahydrodipicolinate + H2O + H(+). The protein operates within amino-acid biosynthesis; L-lysine biosynthesis via DAP pathway; (S)-tetrahydrodipicolinate from L-aspartate: step 3/4. Functionally, catalyzes the condensation of (S)-aspartate-beta-semialdehyde [(S)-ASA] and pyruvate to 4-hydroxy-tetrahydrodipicolinate (HTPA). The chain is 4-hydroxy-tetrahydrodipicolinate synthase from Psychrobacter sp. (strain PRwf-1).